The chain runs to 295 residues: UDP-N-acetylenolpyruvoylglucosamine reductase (295 aa).

The region spanning 23–188 is the FAD-binding PCMH-type domain; it reads KVGGPADFLA…ISAKFALKPG (166 aa). Arg-167 is an active-site residue. Ser-217 (proton donor) is an active-site residue. Glu-287 is a catalytic residue.

The protein belongs to the MurB family. FAD serves as cofactor.

It localises to the cytoplasm. The catalysed reaction is UDP-N-acetyl-alpha-D-muramate + NADP(+) = UDP-N-acetyl-3-O-(1-carboxyvinyl)-alpha-D-glucosamine + NADPH + H(+). It participates in cell wall biogenesis; peptidoglycan biosynthesis. In terms of biological role, cell wall formation. This is UDP-N-acetylenolpyruvoylglucosamine reductase from Streptococcus pyogenes serotype M49 (strain NZ131).